We begin with the raw amino-acid sequence, 118 residues long: Large ribosomal subunit protein bL19 (118 aa).

The protein belongs to the bacterial ribosomal protein bL19 family.

This protein is located at the 30S-50S ribosomal subunit interface and may play a role in the structure and function of the aminoacyl-tRNA binding site. In Hahella chejuensis (strain KCTC 2396), this protein is Large ribosomal subunit protein bL19.